The sequence spans 244 residues: uncharacterized protein (244 aa).

Helical transmembrane passes span 22–42, 63–83, 110–130, 140–160, 186–206, and 213–233; these read IMLQ…LLSF, FIFS…WGLT, VILL…EAFA, IMSL…NLTV, GVLF…IFQL, and AVFD…MLVV.

The protein localises to the cell membrane. This is an uncharacterized protein from Haemophilus influenzae (strain ATCC 51907 / DSM 11121 / KW20 / Rd).